Reading from the N-terminus, the 196-residue chain is Protein GrpE (196 aa).

Positions 1–40 (MSSKEQKTPEGQAPEEIIMDQHEEVEAVEPNDSAEQVDPR) are disordered.

Belongs to the GrpE family. Homodimer.

Its subcellular location is the cytoplasm. Functionally, participates actively in the response to hyperosmotic and heat shock by preventing the aggregation of stress-denatured proteins, in association with DnaK and GrpE. It is the nucleotide exchange factor for DnaK and may function as a thermosensor. Unfolded proteins bind initially to DnaJ; upon interaction with the DnaJ-bound protein, DnaK hydrolyzes its bound ATP, resulting in the formation of a stable complex. GrpE releases ADP from DnaK; ATP binding to DnaK triggers the release of the substrate protein, thus completing the reaction cycle. Several rounds of ATP-dependent interactions between DnaJ, DnaK and GrpE are required for fully efficient folding. This Salmonella gallinarum (strain 287/91 / NCTC 13346) protein is Protein GrpE.